The following is a 30-amino-acid chain: Conotoxin Bt12.1 (30 aa).

Contains 3 disulfide bonds. In terms of tissue distribution, expressed by the venom duct.

The protein resides in the secreted. The sequence is that of Conotoxin Bt12.1 from Conus betulinus (Beech cone).